Consider the following 216-residue polypeptide: Cytochrome c biogenesis ATP-binding export protein CcmA (216 aa).

Residues 18-216 (LQVEGLAGRR…AHARTLEISA (199 aa)) enclose the ABC transporter domain. 50 to 57 (GHNGSGKT) is a binding site for ATP.

It belongs to the ABC transporter superfamily. CcmA exporter (TC 3.A.1.107) family. As to quaternary structure, the complex is composed of two ATP-binding proteins (CcmA) and two transmembrane proteins (CcmB).

Its subcellular location is the cell inner membrane. The catalysed reaction is heme b(in) + ATP + H2O = heme b(out) + ADP + phosphate + H(+). Its function is as follows. Part of the ABC transporter complex CcmAB involved in the biogenesis of c-type cytochromes; once thought to export heme, this seems not to be the case, but its exact role is uncertain. Responsible for energy coupling to the transport system. This chain is Cytochrome c biogenesis ATP-binding export protein CcmA, found in Nitrosococcus oceani (strain ATCC 19707 / BCRC 17464 / JCM 30415 / NCIMB 11848 / C-107).